The chain runs to 213 residues: MKVVAFERSVQGTGASRRLRNSGKTPGIVYGSKDPALVIELDHNALFHALRKEAFHSSILDLEIDGKAQKVLLRDYQMHPFKPLVLHIDFQRVSASEKVHMRVPLHFTNADTSAAVKLQGAVISHILTELEVSCLPADLPEFVEVDLAKIEVGHGIHAKDIALPKGVTLVLHVEQENPVLANARIPAVKAAEPTDAPTAPAAAPGAEAPKDKA.

The span at 191–207 (AEPTDAPTAPAAAPGAE) shows a compositional bias: low complexity. A disordered region spans residues 191–213 (AEPTDAPTAPAAAPGAEAPKDKA).

It belongs to the bacterial ribosomal protein bL25 family. CTC subfamily. Part of the 50S ribosomal subunit; part of the 5S rRNA/L5/L18/L25 subcomplex. Contacts the 5S rRNA. Binds to the 5S rRNA independently of L5 and L18.

In terms of biological role, this is one of the proteins that binds to the 5S RNA in the ribosome where it forms part of the central protuberance. This chain is Large ribosomal subunit protein bL25, found in Polynucleobacter asymbioticus (strain DSM 18221 / CIP 109841 / QLW-P1DMWA-1) (Polynucleobacter necessarius subsp. asymbioticus).